We begin with the raw amino-acid sequence, 248 residues long: Chromatin target of PRMT1 protein (248 aa).

Ala2 is modified (N-acetylalanine). Position 33 is a phosphothreonine (Thr33). Phosphoserine is present on residues Ser40, Ser49, and Ser64. Lys70 is covalently cross-linked (Glycyl lysine isopeptide (Lys-Gly) (interchain with G-Cter in SUMO2)). Residues 151–204 are disordered; it reads LRRGGVRGRGGPGRGGLGRGAMGRGGIGGRGRGMIGRGRGGFGGRGRGRGRGRG. Residues 153–206 form an interaction with PRMT1 region; sequence RGGVRGRGGPGRGGLGRGAMGRGGIGGRGRGMIGRGRGGFGGRGRGRGRGRGAL. Gly residues predominate over residues 157-195; the sequence is RGRGGPGRGGLGRGAMGRGGIGGRGRGMIGRGRGGFGGR. The GAR motif; involved in 5hmC binding motif lies at 194 to 203; the sequence is GRGRGRGRGR. Thr242 is modified (phosphothreonine).

As to quaternary structure, interacts with PRMT1 and PRMT5. Interacts with the 5FMC complex; the interaction is methylation-dependent. Interacts with FYTTD1, SET and PRC1 complex members CBX4, RNF2 and PHC2; the interactions are methylation-independent. Interacts with ZNF148. Component of the transcription/export (TREX) complex at least composed of ALYREF/THOC4, DDX39B, SARNP/CIP29, CHTOP and the THO subcomplex; TREX seems to have dynamic structure involving ATP-dependent remodeling; in the complex interacts (methylated) with ALYREF/THOC4 and with DDX39B in a methylation-independent manner. Interacts (methylated) with NXF1; the interaction is mutually exclusive with the NXF1:THOC5 interaction. Interacts with WDR77 and ERH. Post-translationally, asymmetrically methylated by PRMT1. Symmetrically methylated by PRMT5. Expressed in an erythroid progenitor cell line derived from peripheral blood. Expressed in glioblastoma cells.

The protein localises to the nucleus. The protein resides in the nucleolus. It localises to the nucleoplasm. It is found in the nucleus speckle. Functionally, plays an important role in the ligand-dependent activation of estrogen receptor target genes. May play a role in the silencing of fetal globin genes. Recruits the 5FMC complex to ZNF148, leading to desumoylation of ZNF148 and subsequent transactivation of ZNF148 target genes. Plays an important role in the tumorigenicity of glioblastoma cells. Binds to 5-hydroxymethylcytosine (5hmC) and associates with the methylosome complex containing PRMT1, PRMT5, MEP50 and ERH. The CHTOP-methylosome complex associated with 5hmC is recruited to selective sites on the chromosome, where it methylates H4R3 and activates the transcription of genes involved in glioblastomagenesis. In terms of biological role, required for effective mRNA nuclear export and is a component of the TREX complex which is thought to couple mRNA transcription, processing and nuclear export, and specifically associates with spliced mRNA and not with unspliced pre-mRNA. TREX is recruited to spliced mRNAs by a transcription-independent mechanism, binds to mRNA upstream of the exon-junction complex (EJC) and is recruited in a splicing- and cap-dependent manner to a region near the 5' end of the mRNA where it functions in mRNA export to the cytoplasm via the TAP/NFX1 pathway. The TREX complex is essential for the export of Kaposi's sarcoma-associated herpesvirus (KSHV) intronless mRNAs and infectious virus production. Stimulates DDX39B ATPase and helicase activities. In cooperation with ALYREF/THOC4 enhances NXF1 RNA binding activity. The polypeptide is Chromatin target of PRMT1 protein (CHTOP) (Homo sapiens (Human)).